The sequence spans 309 residues: 2-phospho-L-lactate transferase (309 aa).

The 7,8-didemethyl-8-hydroxy-5-deazariboflavin site is built by Asp48 and Lys87.

The protein belongs to the CofD family. As to quaternary structure, homodimer. Mg(2+) serves as cofactor.

It catalyses the reaction (2S)-lactyl-2-diphospho-5'-guanosine + 7,8-didemethyl-8-hydroxy-5-deazariboflavin = oxidized coenzyme F420-0 + GMP + H(+). The protein operates within cofactor biosynthesis; coenzyme F420 biosynthesis. Catalyzes the transfer of the 2-phospholactate moiety from (2S)-lactyl-2-diphospho-5'-guanosine to 7,8-didemethyl-8-hydroxy-5-deazariboflavin (FO) with the formation of oxidized coenzyme F420-0 and GMP. The polypeptide is 2-phospho-L-lactate transferase (Methanosarcina barkeri (strain Fusaro / DSM 804)).